The chain runs to 325 residues: Cytosolic Fe-S cluster assembly factor Nubp1 homolog (325 aa).

The disordered stretch occupies residues 1–26; it reads MSSGADVPSDAPAHCPGTQSDDAGKA. Positions 15, 29, 32, and 38 each coordinate [4Fe-4S] cluster. 68-75 is an ATP binding site; sequence GKGGVGKS. Residues C243 and C246 each coordinate [4Fe-4S] cluster.

It belongs to the Mrp/NBP35 ATP-binding proteins family. NUBP1/NBP35 subfamily. Heterotetramer of 2 Nubp1 and 2 Nubp2 chains. [4Fe-4S] cluster is required as a cofactor.

The protein resides in the cytoplasm. Its function is as follows. Component of the cytosolic iron-sulfur (Fe/S) protein assembly (CIA) machinery. Required for maturation of extramitochondrial Fe-S proteins. The Nubp1-Nubp2 heterotetramer forms a Fe-S scaffold complex, mediating the de novo assembly of an Fe-S cluster and its transfer to target apoproteins. This Anopheles gambiae (African malaria mosquito) protein is Cytosolic Fe-S cluster assembly factor Nubp1 homolog.